A 528-amino-acid polypeptide reads, in one-letter code: Ribonuclease Y (528 aa).

Residues 15-35 (SLFFLALICGSIIGYFLYSFF) traverse the membrane as a helical segment. The KH domain maps to 217–277 (NISVVNIPNE…IRREIAKKTL (61 aa)). Residues 343 to 436 (VLKHSLEVAF…VAIADTLSSA (94 aa)) form the HD domain.

The protein belongs to the RNase Y family.

It localises to the cell membrane. Functionally, endoribonuclease that initiates mRNA decay. In Aster yellows witches'-broom phytoplasma (strain AYWB), this protein is Ribonuclease Y.